Reading from the N-terminus, the 356-residue chain is Histidinol-phosphate aminotransferase (356 aa).

The residue at position 214 (Lys214) is an N6-(pyridoxal phosphate)lysine.

This sequence belongs to the class-II pyridoxal-phosphate-dependent aminotransferase family. Histidinol-phosphate aminotransferase subfamily. In terms of assembly, homodimer. Requires pyridoxal 5'-phosphate as cofactor.

It catalyses the reaction L-histidinol phosphate + 2-oxoglutarate = 3-(imidazol-4-yl)-2-oxopropyl phosphate + L-glutamate. Its pathway is amino-acid biosynthesis; L-histidine biosynthesis; L-histidine from 5-phospho-alpha-D-ribose 1-diphosphate: step 7/9. This Shigella sonnei (strain Ss046) protein is Histidinol-phosphate aminotransferase.